A 202-amino-acid polypeptide reads, in one-letter code: Pyridoxal 5'-phosphate synthase subunit PdxT (202 aa).

50-52 is an L-glutamine binding site; the sequence is GES. Cysteine 82 serves as the catalytic Nucleophile. L-glutamine is bound by residues arginine 111 and 140–141; that span reads IR. Catalysis depends on charge relay system residues histidine 176 and glutamate 178.

This sequence belongs to the glutaminase PdxT/SNO family. As to quaternary structure, in the presence of PdxS, forms a dodecamer of heterodimers. Only shows activity in the heterodimer.

It carries out the reaction aldehydo-D-ribose 5-phosphate + D-glyceraldehyde 3-phosphate + L-glutamine = pyridoxal 5'-phosphate + L-glutamate + phosphate + 3 H2O + H(+). It catalyses the reaction L-glutamine + H2O = L-glutamate + NH4(+). It functions in the pathway cofactor biosynthesis; pyridoxal 5'-phosphate biosynthesis. Catalyzes the hydrolysis of glutamine to glutamate and ammonia as part of the biosynthesis of pyridoxal 5'-phosphate. The resulting ammonia molecule is channeled to the active site of PdxS. This Streptomyces coelicolor (strain ATCC BAA-471 / A3(2) / M145) protein is Pyridoxal 5'-phosphate synthase subunit PdxT.